Consider the following 230-residue polypeptide: Ribonuclease 3 (230 aa).

The 134-residue stretch at methionine 1–glycine 134 folds into the RNase III domain. Glutamate 47 is a Mg(2+) binding site. Aspartate 51 is a catalytic residue. Mg(2+) is bound by residues aspartate 120 and glutamate 123. Glutamate 123 is an active-site residue. The 70-residue stretch at aspartate 160–glutamate 229 folds into the DRBM domain.

Belongs to the ribonuclease III family. In terms of assembly, homodimer. Mg(2+) serves as cofactor.

Its subcellular location is the cytoplasm. It catalyses the reaction Endonucleolytic cleavage to 5'-phosphomonoester.. Functionally, digests double-stranded RNA. Involved in the processing of primary rRNA transcript to yield the immediate precursors to the large and small rRNAs (23S and 16S). Processes some mRNAs, and tRNAs when they are encoded in the rRNA operon. Processes pre-crRNA and tracrRNA of type II CRISPR loci if present in the organism. The sequence is that of Ribonuclease 3 from Streptococcus pyogenes serotype M49 (strain NZ131).